A 515-amino-acid polypeptide reads, in one-letter code: Maturase K (515 aa).

Belongs to the intron maturase 2 family. MatK subfamily.

The protein localises to the plastid. Its subcellular location is the chloroplast. Usually encoded in the trnK tRNA gene intron. Probably assists in splicing its own and other chloroplast group II introns. The protein is Maturase K of Pinus patula (Mexican weeping pine).